A 142-amino-acid polypeptide reads, in one-letter code: DNA-directed RNA polymerase II subunit RPB4 (142 aa).

Belongs to the eukaryotic RPB4 RNA polymerase subunit family. In terms of assembly, component of the RNA polymerase II (Pol II) core complex consisting of 12 subunits: a ten-subunit catalytic core composed of POLR2A/RPB1, POLR2B/RPB2, POLR2C/RPB3, POLR2I/RPB9, POLR2J/RPB11, POLR2E/RPABC1, POLR2F/RPABC2, POLR2H/RPABC3, POLR2K/RPABC4 and POLR2L/RPABC5 and a mobile stalk composed of two subunits POLR2D/RPB4 and POLR2G/RPB7, protruding from the core and functioning primarily in transcription initiation. Part of Pol II(G) complex, in which Pol II core associates with an additional subunit POLR2M; unlike conventional Pol II, Pol II(G) functions as a transcriptional repressor. Part of Pol II pre-initiation complex (PIC), in which Pol II core assembles with Mediator, general transcription factors and other specific initiation factors including GTF2E1, GTF2E2, GTF2F1, GTF2F2, TCEA1, ERCC2, ERCC3, GTF2H2, GTF2H3, GTF2H4, GTF2H5, GTF2A1, GTF2A2, GTF2B and TBP; this large multi-subunit PIC complex mediates DNA unwinding and targets Pol II core to the transcription start site where the first phosphodiester bond forms.

Its subcellular location is the nucleus. In terms of biological role, core component of RNA polymerase II (Pol II), a DNA-dependent RNA polymerase which synthesizes mRNA precursors and many functional non-coding RNAs using the four ribonucleoside triphosphates as substrates. Pol II is the central component of the basal RNA polymerase II transcription machinery. It is composed of mobile elements that move relative to each other. POLR2D/RPB4 is part of a subcomplex with POLR2G/RPB7 that binds to a pocket formed by POLR2A/RPB1, POLR2B/RPB2 and POLR2F/RPABC2 at the base of the clamp element. The POLR2D/RPB4-POLR2G/RPB7 subcomplex seems to lock the clamp via POLR2G/RPB7 in the closed conformation thus preventing double-stranded DNA to enter the active site cleft. The POLR2D/RPB4-POLR2G/RPB7 subcomplex binds single-stranded DNA and RNA. The sequence is that of DNA-directed RNA polymerase II subunit RPB4 (POLR2D) from Bos taurus (Bovine).